We begin with the raw amino-acid sequence, 330 residues long: Ketol-acid reductoisomerase (NADP(+)) (330 aa).

Positions 1–181 (MKVFYDSDFK…GLSRAGVIQT (181 aa)) constitute a KARI N-terminal Rossmann domain. Residues 24-27 (YGSQ), arginine 47, serine 52, and 82-85 (DELQ) each bind NADP(+). Residue histidine 107 is part of the active site. NADP(+) is bound at residue glycine 133. The KARI C-terminal knotted domain occupies 182–327 (TFKEETETDL…AKLRKMCGLE (146 aa)). Residues aspartate 190, glutamate 194, glutamate 226, and glutamate 230 each contribute to the Mg(2+) site. Serine 251 is a substrate binding site.

This sequence belongs to the ketol-acid reductoisomerase family. Requires Mg(2+) as cofactor.

It carries out the reaction (2R)-2,3-dihydroxy-3-methylbutanoate + NADP(+) = (2S)-2-acetolactate + NADPH + H(+). The enzyme catalyses (2R,3R)-2,3-dihydroxy-3-methylpentanoate + NADP(+) = (S)-2-ethyl-2-hydroxy-3-oxobutanoate + NADPH + H(+). The protein operates within amino-acid biosynthesis; L-isoleucine biosynthesis; L-isoleucine from 2-oxobutanoate: step 2/4. It functions in the pathway amino-acid biosynthesis; L-valine biosynthesis; L-valine from pyruvate: step 2/4. Functionally, involved in the biosynthesis of branched-chain amino acids (BCAA). Catalyzes an alkyl-migration followed by a ketol-acid reduction of (S)-2-acetolactate (S2AL) to yield (R)-2,3-dihydroxy-isovalerate. In the isomerase reaction, S2AL is rearranged via a Mg-dependent methyl migration to produce 3-hydroxy-3-methyl-2-ketobutyrate (HMKB). In the reductase reaction, this 2-ketoacid undergoes a metal-dependent reduction by NADPH to yield (R)-2,3-dihydroxy-isovalerate. This chain is Ketol-acid reductoisomerase (NADP(+)), found in Methanococcus maripaludis (strain C6 / ATCC BAA-1332).